The primary structure comprises 147 residues: Ribosome maturation factor RimP (147 aa).

It belongs to the RimP family.

The protein localises to the cytoplasm. Required for maturation of 30S ribosomal subunits. The chain is Ribosome maturation factor RimP from Legionella pneumophila (strain Lens).